A 566-amino-acid polypeptide reads, in one-letter code: Tetratricopeptide repeat protein 34 (566 aa).

The disordered stretch occupies residues 1 to 29 (MLQRSPRAGPSRAQGRREAAETGGPTTQE). 8 TPR repeats span residues 50–83 (EASRLLAADALYRLGRLEETHKALLVALSRRPQA), 178–211 (SESLLARARCYGFLGQKKTAMFDFNTVLRAEPGN), 212–245 (VQALCGRALVHLALDQLQEAVDDIVSALKLGPGT), 306–339 (PHWHLLLADILMAQGSYEEAGTHLEKALHRAPTS), 341–373 (AARARLGLLQLKKGDVPGAARDLQSLAEVDAPD), 424–457 (ACHLRLRATCLAELQEFGRALRDLDHVLQEALGD), 464–497 (AEDFCRQGRLLLSLGDEAAAAGAFAQALKLAPSL), and 512–545 (ARMFLLRGQCCLEEQRHAEAWTAVESGLLVDPDH).

This Homo sapiens (Human) protein is Tetratricopeptide repeat protein 34 (TTC34).